The sequence spans 3515 residues: Microtubule-actin cross-linking factor 1, isoforms 6/7 (3515 aa).

Disordered stretches follow at residues 1–23 (MGKP…KGEE), 108–136 (VQKS…WKSF), 155–196 (VSEA…TLEH), 965–1178 (TEED…AVPT), 1217–1298 (SPAA…SPAA), 1710–1730 (EELA…QFQQ), and 3078–3108 (PTHA…ILSQ). Basic and acidic residues predominate over residues 120–129 (PNAERKDNVN). Residues 157-245 (EAGASNPSLQ…ESEAVATSGN (89 aa)) are 13 X 13 AA approximate tandem repeat of P-T-S-P-A-A-A-V-P-T-P-E-E. Low complexity-rich tracts occupy residues 995 to 1031 (STPE…SPAA) and 1040 to 1139 (TSPA…AVPT). Repeat copies occupy residues 1012-1024 (EPTS…PTPE), 1026-1037 (PTSPAAAVPPPE), 1038-1051 (EPTS…TPEE), 1052-1064 (PTSP…TPEE), 1065-1077 (PTSP…TPEE), 1078-1090 (PTSP…TPEE), 1091-1103 (PTSP…TPEE), 1104-1116 (PTSP…TPEE), 1117-1129 (PASP…TPEE), 1130-1142 (PASP…TPEE), 1143-1155 (PAFP…TPEE), 1156-1168 (SASA…TPEE), and 1169-1178 (SASPAAAVPT). Pro residues predominate over residues 1140–1151 (PEEPAFPAPAVP). 2 stretches are compositionally biased toward low complexity: residues 1162-1178 (AVPT…AVPT) and 1268-1298 (SSPA…SPAA). The segment covering 1715–1730 (SGGQSPTGEQIPQFQQ) has biased composition (polar residues). 2 EF-hand domains span residues 3168–3203 (HKKS…SKFP) and 3204–3239 (TTKL…NKDA). 10 residues coordinate Ca(2+): Asp3181, Asp3183, Asp3185, Lys3187, Glu3192, Asp3217, Asp3219, Asp3221, Tyr3223, and Glu3228. A GAR domain is found at 3244-3316 (TDADKIEDEV…EFLVKNDPCR (73 aa)). The tract at residues 3332–3515 (PEGASQGMTP…ASPRTPGPKR (184 aa)) is disordered. The segment covering 3352–3386 (SSRAASPTRSSSSASQSNHSCTSMPSSPATPASGT) has biased composition (low complexity). Polar residues predominate over residues 3402-3426 (TFHSSRTSLAGDTSNSSSPASTGAK). Positions 3437-3451 (SRPGSRAGSRAGSRA) are enriched in low complexity. The segment covering 3466–3488 (ETQSACSDTSESSAAGGQGNSRR) has biased composition (polar residues).

Its subcellular location is the cytoplasm. It localises to the cytoskeleton. The protein is Microtubule-actin cross-linking factor 1, isoforms 6/7 of Homo sapiens (Human).